The primary structure comprises 231 residues: Putative N-acetylmannosamine-6-phosphate 2-epimerase (231 aa).

Belongs to the NanE family.

It carries out the reaction an N-acyl-D-glucosamine 6-phosphate = an N-acyl-D-mannosamine 6-phosphate. It functions in the pathway amino-sugar metabolism; N-acetylneuraminate degradation; D-fructose 6-phosphate from N-acetylneuraminate: step 3/5. Its function is as follows. Converts N-acetylmannosamine-6-phosphate (ManNAc-6-P) to N-acetylglucosamine-6-phosphate (GlcNAc-6-P). This chain is Putative N-acetylmannosamine-6-phosphate 2-epimerase, found in Listeria monocytogenes serotype 4b (strain CLIP80459).